The sequence spans 459 residues: MVQISEVKDQVPGSSAGARTAAHTHIKGLGLDEFGAAKQVEGGFVGQVEAREACGVIVDLIKAKRMSGRAILLAGGPSTGKTALALAITQELGPKVPFCPLVGSELFSVEVKKTETLMENFRRAIGLRIKEVKEVYEGEVTELTPEEAENPLGGYGKTISHVIVGLKSAKGTKTLRLDPTIYESIQREKVSVGDVIYIESNSGAVKRVGRSDAYATEFDLEAEEYVPLPKGEVHKKKEIIQDVTLHDLDVANARPQGGQDVISMMGQLMKPKKTEITEKLRHEVNKVVAKYIDQGVAELVPGVLFIDEVNMLDIEIFTFLNRALELEIAPVVVLASNRGMTTVRGTEDVVSAHGIPPDLIDRLLIVRTLPYTQDEIRVIIEKRSKVENLQLEQAALDLLAAMGSDMSLRYALQLLTPAGILAATAGRTEILLSDIEEAKMLFLDAKRSTKILESNSNYL.

Residue glycine 75–threonine 82 coordinates ATP.

It belongs to the RuvB family. As to quaternary structure, may form heterododecamers with RVB2. Component of the SWR1 chromatin remodeling complex, the INO80 chromatin remodeling complex, and of the R2TP complex.

It localises to the nucleus. The enzyme catalyses ATP + H2O = ADP + phosphate + H(+). DNA helicase which participates in several chromatin remodeling complexes, including the SWR1 and the INO80 complexes. The SWR1 complex mediates the ATP-dependent exchange of histone H2A for the H2A variant HZT1 leading to transcriptional regulation of selected genes by chromatin remodeling. The INO80 complex remodels chromatin by shifting nucleosomes and is involved in DNA repair. Also involved in pre-rRNA processing. In Eremothecium gossypii (strain ATCC 10895 / CBS 109.51 / FGSC 9923 / NRRL Y-1056) (Yeast), this protein is RuvB-like helicase 1 (RVB1).